We begin with the raw amino-acid sequence, 132 residues long: Ribosome-binding factor A (132 aa).

It belongs to the RbfA family. As to quaternary structure, monomer. Binds 30S ribosomal subunits, but not 50S ribosomal subunits or 70S ribosomes.

Its subcellular location is the cytoplasm. In terms of biological role, one of several proteins that assist in the late maturation steps of the functional core of the 30S ribosomal subunit. Associates with free 30S ribosomal subunits (but not with 30S subunits that are part of 70S ribosomes or polysomes). Required for efficient processing of 16S rRNA. May interact with the 5'-terminal helix region of 16S rRNA. This Pseudomonas putida (strain GB-1) protein is Ribosome-binding factor A.